We begin with the raw amino-acid sequence, 479 residues long: Muscarinic acetylcholine receptor M4 (479 aa).

The Extracellular portion of the chain corresponds to 1–30 (MANFTPVNGSSANQSVRLVTTAHNHLETVE). N-linked (GlcNAc...) asparagine glycosylation is found at Asn-8 and Asn-13. Residues 31-53 (MVFIATVTGSLSLVTVVGNILVM) traverse the membrane as a helical segment. Residues 54-67 (LSIKVNRQLQTVNN) lie on the Cytoplasmic side of the membrane. Residues 68–88 (YFLFSLACADLIIGAFSMNLY) form a helical membrane-spanning segment. Topologically, residues 89–105 (TLYIIKGYWPLGAVVCD) are extracellular. A disulfide bridge links Cys-104 with Cys-184. Residues 106–127 (LWLALDYVVSNASVMNLLIISF) form a helical membrane-spanning segment. At 128–147 (DRYFCVTKPLTYPARRTTKM) the chain is on the cytoplasmic side. Residues 148 to 170 (AGLMIAAAWVLSFVLWAPAILFW) form a helical membrane-spanning segment. At 171–192 (QFVVGKRTVPDNQCFIQFLSNP) the chain is on the extracellular side. A helical membrane pass occupies residues 193–215 (AVTFGTAIAAFYLPVVIMTVLYI). Topologically, residues 216-401 (HISLASRSRV…AARERKVTRT (186 aa)) are cytoplasmic. The segment at 271–334 (LEEAPPPALP…APTLQPRTLN (64 aa)) is disordered. A compositionally biased stretch (pro residues) spans 274–285 (APPPALPPPPRP). Residues 293–303 (NESSSGSATQN) are compositionally biased toward polar residues. The segment covering 310–333 (TELSTTEAATTPALPAPTLQPRTL) has biased composition (low complexity). A helical transmembrane segment spans residues 402 to 422 (IFAILLAFILTWTPYNVMVLV). Over 423-436 (NTFCQSCIPERVWS) the chain is Extracellular. The chain crosses the membrane as a helical span at residues 437–456 (IGYWLCYVNSTINPACYALC). Over 457 to 479 (NATFKKTFRHLLLCQYRNIGTAR) the chain is Cytoplasmic. A phosphothreonine mark is found at Thr-459, Thr-463, and Thr-477.

This sequence belongs to the G-protein coupled receptor 1 family. Muscarinic acetylcholine receptor subfamily. CHRM4 sub-subfamily.

Its subcellular location is the cell membrane. It is found in the postsynaptic cell membrane. Functionally, the muscarinic acetylcholine receptor mediates various cellular responses, including inhibition of adenylate cyclase, breakdown of phosphoinositides and modulation of potassium channels through the action of G proteins. Primary transducing effect is inhibition of adenylate cyclase. The protein is Muscarinic acetylcholine receptor M4 (Chrm4) of Mus musculus (Mouse).